A 199-amino-acid chain; its full sequence is V-type ATP synthase subunit E (199 aa).

The protein belongs to the V-ATPase E subunit family.

Functionally, produces ATP from ADP in the presence of a proton gradient across the membrane. The protein is V-type ATP synthase subunit E of Clostridium botulinum (strain Hall / ATCC 3502 / NCTC 13319 / Type A).